A 289-amino-acid chain; its full sequence is 2,3-dimethylmalate lyase (289 aa).

The protein belongs to the isocitrate lyase/PEP mutase superfamily. Homotetramer. Mg(2+) serves as cofactor.

It carries out the reaction (2R,3S)-2,3-dimethylmalate = propanoate + pyruvate. Its pathway is cofactor degradation; nicotinate degradation; propanoate and pyruvate from 6-hydroxynicotinate: step 8/8. Its activity is regulated as follows. Completely inhibited by propionic anhydride and by cystamine. Irreversibly inhibited by the mercapto reagents iodoacetate and iodoacetamide. Unaffected by hydroxylamine. In terms of biological role, catalyzes the formation of proponate and pyruvate from (2R,3S)-2,3-dimethylmalate. Has no activity toward dimethylmaleate, malate, citramalate, isocitrate and citrate. The protein is 2,3-dimethylmalate lyase of Eubacterium barkeri (Clostridium barkeri).